We begin with the raw amino-acid sequence, 855 residues long: Pre-mRNA-splicing factor SYF1 (855 aa).

9 HAT repeats span residues 15–47, 48–80, 90–122, 124–158, 160–192, 198–230, 235–268, 270–305, and 369–407; these read LVFE…FKQG, APKP…ARRA, PAYE…FLMD, GRVT…FLRS, PLPE…SSDR, QRLA…LISQ, VQSL…YYIR, GHFE…FEES, and GRPR…FYED. Lys-420 is modified (N6-acetyllysine). 5 HAT repeats span residues 498–530, 532–566, 571–605, 643–677, and 679–713; these read GTFQ…FLEE, KYFE…KFIA, RKLE…LEEE, YGVT…MECK, and GEID…FEVR. The tract at residues 810–855 is disordered; sequence LAQQVNPEEIQLGEDEDEDEMDLEPNEVRLEQQSVPAAVFGSLKED. The segment covering 820-834 has biased composition (acidic residues); that stretch reads QLGEDEDEDEMDLEP. Ser-851 bears the Phosphoserine mark.

It belongs to the crooked-neck family. In terms of assembly, associates with RNA polymerase II, the TCR-specific proteins CKN1/CSA and ERCC6/CSB, and XPA. Identified in the spliceosome C complex. Component of the XAB2 complex, a multimeric protein complex composed of XAB2, PRPF19, AQR, ZNF830, ISY1, and PPIE. Identified in a pentameric intron-binding (IB) complex composed of AQR, XAB2, ISY1, ZNF830 and PPIE that is incorporated into the spliceosome as a preassembled complex. The IB complex does not contain PRPF19.

Its subcellular location is the nucleus. In terms of biological role, involved in pre-mRNA splicing as component of the spliceosome. Involved in transcription-coupled repair (TCR), transcription and pre-mRNA splicing. This chain is Pre-mRNA-splicing factor SYF1 (XAB2), found in Homo sapiens (Human).